A 503-amino-acid polypeptide reads, in one-letter code: Probable cytosol aminopeptidase (503 aa).

K268 and D273 together coordinate Mn(2+). The active site involves K280. The Mn(2+) site is built by D291, D350, and E352. R354 is an active-site residue.

The protein belongs to the peptidase M17 family. The cofactor is Mn(2+).

Its subcellular location is the cytoplasm. It carries out the reaction Release of an N-terminal amino acid, Xaa-|-Yaa-, in which Xaa is preferably Leu, but may be other amino acids including Pro although not Arg or Lys, and Yaa may be Pro. Amino acid amides and methyl esters are also readily hydrolyzed, but rates on arylamides are exceedingly low.. The catalysed reaction is Release of an N-terminal amino acid, preferentially leucine, but not glutamic or aspartic acids.. Functionally, presumably involved in the processing and regular turnover of intracellular proteins. Catalyzes the removal of unsubstituted N-terminal amino acids from various peptides. This Methylobacterium radiotolerans (strain ATCC 27329 / DSM 1819 / JCM 2831 / NBRC 15690 / NCIMB 10815 / 0-1) protein is Probable cytosol aminopeptidase.